We begin with the raw amino-acid sequence, 236 residues long: Rab-like protein 3 (236 aa).

Residues 1-236 (MASLDRVKVL…AGTLKSLHYD (236 aa)) are small GTPase-like. GTP is bound by residues 16-21 (GVGKSS), 148-150 (KLD), and 179-180 (DC).

The protein belongs to the small GTPase superfamily. Rab family. As to quaternary structure, homodimer. Interacts with GPR89; the interaction stabilizes GPR89. Interacts with RAP1GDS1.

Its function is as follows. Required for KRAS signaling regulation and modulation of cell proliferation. Regulator of KRAS prenylation, and probably prenylation of other small GTPases. Required for lymphocyte development and function. Not required for myeloid cell development. The chain is Rab-like protein 3 (RABL3) from Homo sapiens (Human).